The following is a 775-amino-acid chain: ATP-dependent RNA helicase DBP4 (775 aa).

Basic residues predominate over residues 1 to 12; sequence MVKSQRNGKKGA. The segment at 1-30 is disordered; it reads MVKSQRNGKKGAKVLSRKEKRQSEKEEMDS. A compositionally biased stretch (basic and acidic residues) spans 21–30; that stretch reads RQSEKEEMDS. The Q motif signature appears at 48–76; the sequence is KHFSDLPITQNTLRGLKECSFVSLTDIQK. Positions 79–253 constitute a Helicase ATP-binding domain; sequence IPVALKGEDL…RLSLTNPKRI (175 aa). 92–99 contacts ATP; that stretch reads ARTGSGKT. The short motif at 201–204 is the DEAD box element; that stretch reads DEAD. Positions 267 to 439 constitute a Helicase C-terminal domain; it reads SLDQYYVKVP…SIRPQLQSLC (173 aa). The segment at 633-760 is disordered; sequence EEDFEKAGDA…SKYVEFEEPE (128 aa). Basic and acidic residues predominate over residues 637-671; sequence EKAGDAKQQKMEFVQKEQEAMKITDLADREVERQK. Positions 689–703 are enriched in acidic residues; the sequence is EEWDDGSGMDGEDLP. The span at 704-716 shows a compositional bias: basic and acidic residues; that stretch reads DLERDMEPTEAKP. Residues 723-732 show a composition bias toward acidic residues; it reads FDDDDDDNDG.

The protein belongs to the DEAD box helicase family. DDX10/DBP4 subfamily. In terms of assembly, interacts with the U3 and U14 snoRNAs. Associates with pre-ribosomal complexes.

The protein resides in the nucleus. It is found in the nucleolus. It carries out the reaction ATP + H2O = ADP + phosphate + H(+). Its function is as follows. ATP-dependent RNA helicase required for ribosome biogenesis. Involved in the release of U14 snoRNA in pre-ribosomal complexes. Required for pre-rRNA cleavage at site A2. The protein is ATP-dependent RNA helicase DBP4 (DBP4) of Lodderomyces elongisporus (strain ATCC 11503 / CBS 2605 / JCM 1781 / NBRC 1676 / NRRL YB-4239) (Yeast).